The sequence spans 276 residues: Ribosomal RNA small subunit methyltransferase A (276 aa).

The S-adenosyl-L-methionine site is built by Asn-27, Leu-29, Gly-54, Glu-75, Asp-101, and Asn-122.

Belongs to the class I-like SAM-binding methyltransferase superfamily. rRNA adenine N(6)-methyltransferase family. RsmA subfamily.

It is found in the cytoplasm. It carries out the reaction adenosine(1518)/adenosine(1519) in 16S rRNA + 4 S-adenosyl-L-methionine = N(6)-dimethyladenosine(1518)/N(6)-dimethyladenosine(1519) in 16S rRNA + 4 S-adenosyl-L-homocysteine + 4 H(+). Functionally, specifically dimethylates two adjacent adenosines (A1518 and A1519) in the loop of a conserved hairpin near the 3'-end of 16S rRNA in the 30S particle. May play a critical role in biogenesis of 30S subunits. This is Ribosomal RNA small subunit methyltransferase A from Brucella abortus biovar 1 (strain 9-941).